Here is a 373-residue protein sequence, read N- to C-terminus: 3-dehydroquinate synthase (373 aa).

NAD(+) contacts are provided by residues 67–72 (EGEETK), 101–105 (GVILD), 125–126 (TT), Lys-138, and Lys-147. The Zn(2+) site is built by Glu-180, His-240, and His-256.

The protein belongs to the sugar phosphate cyclases superfamily. Dehydroquinate synthase family. The cofactor is NAD(+). Co(2+) serves as cofactor. Requires Zn(2+) as cofactor.

It is found in the cytoplasm. It catalyses the reaction 7-phospho-2-dehydro-3-deoxy-D-arabino-heptonate = 3-dehydroquinate + phosphate. It participates in metabolic intermediate biosynthesis; chorismate biosynthesis; chorismate from D-erythrose 4-phosphate and phosphoenolpyruvate: step 2/7. Catalyzes the conversion of 3-deoxy-D-arabino-heptulosonate 7-phosphate (DAHP) to dehydroquinate (DHQ). This Chlamydia trachomatis serovar L2 (strain ATCC VR-902B / DSM 19102 / 434/Bu) protein is 3-dehydroquinate synthase.